The primary structure comprises 714 residues: P-loop NTPase domain-containing protein LPA1 (714 aa).

Over residues 1–11 the composition is skewed to low complexity; the sequence is MPMPPQCASSK. Disordered regions lie at residues 1–42, 259–293, and 595–689; these read MPMP…PPPK, QKLD…PRTE, and FGSE…GSGN. The span at 271 to 285 shows a compositional bias: basic and acidic residues; it reads EGRDDTSDDKAHHGS. A compositionally biased stretch (acidic residues) spans 595 to 617; the sequence is FGSEEDADDPPDAGTDEDLTDEE. A compositionally biased stretch (basic and acidic residues) spans 618–636; sequence RDMHEIEAGSVDEHSTKSD. Residues 659–670 show a composition bias toward polar residues; sequence AASSTKNSSNQE.

Expressed in roots, leaf blade shoots, leaf sheath shoots and panicles.

Required for the accumulation of phytic acid in seeds. Phytic acid is the primary storage form of phosphorus in cereal grains and other plant seeds. This is P-loop NTPase domain-containing protein LPA1 from Oryza sativa subsp. japonica (Rice).